A 188-amino-acid chain; its full sequence is Elongation factor P (188 aa).

K34 carries the N6-(3,6-diaminohexanoyl)-5-hydroxylysine modification.

The protein belongs to the elongation factor P family. In terms of processing, may be beta-lysylated on the epsilon-amino group of Lys-34 by the combined action of EpmA and EpmB, and then hydroxylated on the C5 position of the same residue by EpmC (if this protein is present). Lysylation is critical for the stimulatory effect of EF-P on peptide-bond formation. The lysylation moiety may extend toward the peptidyltransferase center and stabilize the terminal 3-CCA end of the tRNA. Hydroxylation of the C5 position on Lys-34 may allow additional potential stabilizing hydrogen-bond interactions with the P-tRNA.

It localises to the cytoplasm. It participates in protein biosynthesis; polypeptide chain elongation. Involved in peptide bond synthesis. Alleviates ribosome stalling that occurs when 3 or more consecutive Pro residues or the sequence PPG is present in a protein, possibly by augmenting the peptidyl transferase activity of the ribosome. Modification of Lys-34 is required for alleviation. The polypeptide is Elongation factor P (Xanthomonas axonopodis pv. citri (strain 306)).